The following is a 456-amino-acid chain: Bacteriochlorophyllide d C-12(1)-methyltransferase (456 aa).

A Radical SAM core domain is found at 178–405; that stretch reads HAKKYSQLIP…MFEPKKLGGE (228 aa). Residues Cys194, Cys198, and Cys201 each contribute to the [4Fe-4S] cluster site.

It belongs to the radical SAM superfamily. [4Fe-4S] cluster serves as cofactor.

Its subcellular location is the cytoplasm. The catalysed reaction is 8-ethyl-12-methyl-3-vinylbacteriochlorophyllide d + S-adenosyl-L-methionine = 8,12-diethyl-3-vinylbacteriochlorophyllide d + S-adenosyl-L-homocysteine + H(+). It functions in the pathway porphyrin-containing compound metabolism; bacteriochlorophyll biosynthesis (light-independent). Functionally, involved in the biosynthesis of the major light-harvesting pigment bacteriochlorophyll c (BChlc), which confers a significant competitive advantage to green sulfur bacteria living at limiting red and near-infrared light intensities. BchR is a methyltransferase that adds a single methyl group to the methyl carbon at the C-12(1) position of 8-ethyl-12-methyl-3-vinylbacteriochlorophyllide d to yield 8,12-diethyl-3-vinylbacteriochlorophyllide d. The chain is Bacteriochlorophyllide d C-12(1)-methyltransferase from Chlorobaculum tepidum (strain ATCC 49652 / DSM 12025 / NBRC 103806 / TLS) (Chlorobium tepidum).